A 244-amino-acid polypeptide reads, in one-letter code: NAD(P)H-quinone oxidoreductase subunit K (244 aa).

[4Fe-4S] cluster is bound by residues Cys60, Cys61, Cys125, and Cys156.

Belongs to the complex I 20 kDa subunit family. NDH-1 can be composed of about 15 different subunits; different subcomplexes with different compositions have been identified which probably have different functions. [4Fe-4S] cluster serves as cofactor.

It localises to the cellular thylakoid membrane. It carries out the reaction a plastoquinone + NADH + (n+1) H(+)(in) = a plastoquinol + NAD(+) + n H(+)(out). The catalysed reaction is a plastoquinone + NADPH + (n+1) H(+)(in) = a plastoquinol + NADP(+) + n H(+)(out). Its function is as follows. NDH-1 shuttles electrons from an unknown electron donor, via FMN and iron-sulfur (Fe-S) centers, to quinones in the respiratory and/or the photosynthetic chain. The immediate electron acceptor for the enzyme in this species is believed to be plastoquinone. Couples the redox reaction to proton translocation, and thus conserves the redox energy in a proton gradient. Cyanobacterial NDH-1 also plays a role in inorganic carbon-concentration. The protein is NAD(P)H-quinone oxidoreductase subunit K of Prochlorococcus marinus (strain AS9601).